A 100-amino-acid chain; its full sequence is Urease subunit gamma (100 aa).

The protein belongs to the urease gamma subunit family. Heterotrimer of UreA (gamma), UreB (beta) and UreC (alpha) subunits. Three heterotrimers associate to form the active enzyme.

The protein resides in the cytoplasm. It carries out the reaction urea + 2 H2O + H(+) = hydrogencarbonate + 2 NH4(+). It functions in the pathway nitrogen metabolism; urea degradation; CO(2) and NH(3) from urea (urease route): step 1/1. This is Urease subunit gamma from Tolumonas auensis (strain DSM 9187 / NBRC 110442 / TA 4).